The following is a 275-amino-acid chain: Shikimate dehydrogenase (NADP(+)) (275 aa).

Shikimate contacts are provided by residues 15–17 (SKS) and threonine 62. Residue lysine 66 is the Proton acceptor of the active site. Glutamate 78 lines the NADP(+) pocket. Shikimate contacts are provided by asparagine 87 and aspartate 102. NADP(+) is bound by residues 127 to 131 (GAGGA), 151 to 156 (NRTPQK), and methionine 215. Shikimate is bound at residue tyrosine 217. Residue glycine 239 participates in NADP(+) binding.

This sequence belongs to the shikimate dehydrogenase family. As to quaternary structure, homodimer.

It catalyses the reaction shikimate + NADP(+) = 3-dehydroshikimate + NADPH + H(+). Its pathway is metabolic intermediate biosynthesis; chorismate biosynthesis; chorismate from D-erythrose 4-phosphate and phosphoenolpyruvate: step 4/7. In terms of biological role, involved in the biosynthesis of the chorismate, which leads to the biosynthesis of aromatic amino acids. Catalyzes the reversible NADPH linked reduction of 3-dehydroshikimate (DHSA) to yield shikimate (SA). This chain is Shikimate dehydrogenase (NADP(+)), found in Nitrosospira multiformis (strain ATCC 25196 / NCIMB 11849 / C 71).